The following is a 1210-amino-acid chain: Multimerin-1 (1210 aa).

A signal peptide spans 1–19; it reads MLGLKFLVLLSILWGRVFR. A disordered region spans residues 57 to 102; it reads ATQNPSTQGPAAAERSSEDDVLLQSTSQPSETSTPPEGRHQTPLEK. Positions 80 to 92 are enriched in low complexity; the sequence is QSTSQPSETSTPP. Asn133 is a glycosylation site (N-linked (GlcNAc...) asparagine). A compositionally biased stretch (polar residues) spans 143-155; sequence SRKSDQQEVSTKS. A disordered region spans residues 143-190; the sequence is SRKSDQQEVSTKSAGDMGNRSARETHLRRSDNSRNQRPSYQKPSFETT. Asn161 carries an N-linked (GlcNAc...) asparagine glycan. Residues 163 to 176 show a composition bias toward basic and acidic residues; the sequence is SARETHLRRSDNSR. The segment covering 177 to 189 has biased composition (polar residues); it reads NQRPSYQKPSFET. The EMI domain maps to 192–267; sequence GKNWCAHVHT…PGYIGPNCQL (76 aa). 3 disulfide bridges follow: Cys196–Cys257, Cys222–Cys230, and Cys256–Cys265. Thr201 is a glycosylation site (O-linked (Fuc) threonine). Residue Thr250 is glycosylated (O-linked (Fuc) threonine). Positions 276–299 are disordered; it reads AHSNQAESHTAVDQGRAQQQKQDC. Residues 303-338 adopt a coiled-coil conformation; the sequence is AMIQKLAEQLSQQERKLSLLQKKVDNASLVADDMRN. Asn328, Asn415, Asn491, Asn525, Asn560, Asn602, Asn712, Asn765, Asn810, Asn822, Asn903, Asn915, Asn963, and Asn1000 each carry an N-linked (GlcNAc...) asparagine glycan. A coiled-coil region spans residues 564 to 690; the sequence is LLEMEKESAR…RHNLLRNEVQ (127 aa). Residues 809 to 846 adopt a coiled-coil conformation; the sequence is FNETTSQVNKCQQNMSHLEENMLSVTKTAKEFETRLQG. Positions 1023-1059 constitute an EGF-like domain; it reads EHSSCSSFPCQNGGTCISGRSNFICACRHPFMGDTCT. Intrachain disulfides connect Cys1027-Cys1038, Cys1032-Cys1047, and Cys1049-Cys1058. Thr1037 is a glycosylation site (O-linked (Fuc) threonine). Residues 1078–1210 form the C1q domain; sequence RYAPMVAFFV…TFSGYLLYRT (133 aa).

Multimeric. Composed of varying sized, disulfide-linked multimers, the smallest of which is a homotrimer. Proteolysis of the promultimerin in the N-terminal region, leads to the mature p155 form that is stored in platelets. Interacts with factor V/Va. In terms of processing, extensively N-glycosylated. O-fucosylated within the EMI domain (at Thr-201 and Thr-250) by FUT10/POFUT3 and FUT11/POFUT4. O-fucosylation at Thr-201 and Thr-1037 are required for facilitating protein folding and secretion.

The protein resides in the secreted. Carrier protein for platelet (but not plasma) factor V/Va. Plays a role in the storage and stabilization of factor V in platelets. Upon release following platelet activation, may limit platelet and plasma factor Va-dependent thrombin generation. Ligand for integrin alpha-IIb/beta-3 and integrin alpha-V/beta-3 on activated platelets, and may function as an extracellular matrix or adhesive protein. In Mus musculus (Mouse), this protein is Multimerin-1.